The primary structure comprises 259 residues: (3R)-3-hydroxyacyl-CoA dehydrogenase (259 aa).

NAD(+) is bound by residues 13 to 21 (LVTGAGSGI) and 40 to 41 (DL). Ser-58 is subject to Phosphoserine. 72-74 (ADV) serves as a coordination point for NAD(+). Position 154 (Ser-154) interacts with substrate. Lys-158 bears the N6-succinyllysine mark. The active-site Proton acceptor is the Tyr-167. NAD(+) is bound by residues 167-171 (YAASK) and 200-202 (ITT). Lys-171 is subject to N6-succinyllysine.

This sequence belongs to the short-chain dehydrogenases/reductases (SDR) family. Heterotetramer with CBR4; contains two molecules of HSD17B8 and CBR4.

The protein resides in the mitochondrion matrix. The enzyme catalyses a (3R)-3-hydroxyacyl-CoA + NAD(+) = a 3-oxoacyl-CoA + NADH + H(+). It carries out the reaction 17beta-estradiol + NAD(+) = estrone + NADH + H(+). It catalyses the reaction testosterone + NAD(+) = androst-4-ene-3,17-dione + NADH + H(+). The catalysed reaction is 17beta-hydroxy-5alpha-androstan-3-one + NAD(+) = 5alpha-androstan-3,17-dione + NADH + H(+). Its pathway is steroid biosynthesis; estrogen biosynthesis. It participates in lipid metabolism; fatty acid biosynthesis. It functions in the pathway lipid metabolism; mitochondrial fatty acid beta-oxidation. Its function is as follows. Required for the solubility and assembly of the heterotetramer 3-ketoacyl-[acyl carrier protein] (ACP) reductase functional complex (KAR or KAR1) that forms part of the mitochondrial fatty acid synthase (mtFAS). Alpha-subunit of the KAR complex that acts as scaffold protein required for the stability of carbonyl reductase type-4 (CBR4, beta-subunit of the KAR complex) and for its 3-ketoacyl-ACP reductase activity, thereby participating in mitochondrial fatty acid biosynthesis. Catalyzes the NAD-dependent conversion of (3R)-3-hydroxyacyl-CoA into 3-ketoacyl-CoA (3-oxoacyl-CoA) with no chain length preference; this enzymatic activity is not needed for the KAR function. Prefers (3R)-3-hydroxyacyl-CoA over (3S)-3-hydroxyacyl-CoA and displays enzymatic activity only in the presence of NAD(+). Cooperates with enoyl-CoA hydratase 1 in mitochondria, together they constitute an alternative route to the auxiliary enzyme pathways for the breakdown of Z-PUFA (cis polyunsaturated fatty acid) enoyl-esters. NAD-dependent 17-beta-hydroxysteroid dehydrogenase with highest activity towards estradiol (17beta-estradiol or E2). Has very low activity towards testosterone and dihydrotestosterone (17beta-hydroxy-5alpha-androstan-3-one). Primarily an oxidative enzyme, it can switch to a reductive mode determined in the appropriate physiologic milieu and catalyze the reduction of estrone (E1) to form biologically active 17beta-estradiol. This is (3R)-3-hydroxyacyl-CoA dehydrogenase (HSD17B8) from Canis lupus familiaris (Dog).